We begin with the raw amino-acid sequence, 366 residues long: Molybdopterin synthase catalytic subunit (366 aa).

Residues 101–102 (HR), Lys-117, and 124–126 (KKE) contribute to the substrate site.

The protein belongs to the MoaE family. MOCS2B subfamily. Heterotetramer; composed of 2 small (Mocs2A) and 2 large (Mocs2B) subunits.

It is found in the cytoplasm. The enzyme catalyses 2 [molybdopterin-synthase sulfur-carrier protein]-C-terminal-Gly-aminoethanethioate + cyclic pyranopterin phosphate + H2O = molybdopterin + 2 [molybdopterin-synthase sulfur-carrier protein]-C-terminal Gly-Gly + 2 H(+). It participates in cofactor biosynthesis; molybdopterin biosynthesis. Its function is as follows. Catalytic subunit of the molybdopterin synthase complex, a complex that catalyzes the conversion of precursor Z into molybdopterin. Acts by mediating the incorporation of 2 sulfur atoms from thiocarboxylated Mocs2A into precursor Z to generate a dithiolene group. This is Molybdopterin synthase catalytic subunit from Drosophila mojavensis (Fruit fly).